The following is a 117-amino-acid chain: Large ribosomal subunit protein bL20 (117 aa).

This sequence belongs to the bacterial ribosomal protein bL20 family.

Its function is as follows. Binds directly to 23S ribosomal RNA and is necessary for the in vitro assembly process of the 50S ribosomal subunit. It is not involved in the protein synthesizing functions of that subunit. The sequence is that of Large ribosomal subunit protein bL20 from Pelobacter propionicus (strain DSM 2379 / NBRC 103807 / OttBd1).